The sequence spans 528 residues: Chaperonin GroEL, chloroplastic (528 aa).

ATP is bound by residues 29-32, 86-90, Gly414, 480-482, and Asp496; these read TLGP, DGTTT, and DAA.

This sequence belongs to the chaperonin (HSP60) family. Forms a cylinder of 14 subunits composed of two heptameric rings stacked back-to-back. Interacts with the co-chaperonin GroES.

Its subcellular location is the plastid. The protein localises to the chloroplast. The enzyme catalyses ATP + H2O + a folded polypeptide = ADP + phosphate + an unfolded polypeptide.. Together with its co-chaperonin GroES, plays an essential role in assisting protein folding. The GroEL-GroES system forms a nano-cage that allows encapsulation of the non-native substrate proteins and provides a physical environment optimized to promote and accelerate protein folding. This is Chaperonin GroEL, chloroplastic from Pyropia yezoensis (Susabi-nori).